A 93-amino-acid chain; its full sequence is MDYFRLAEKFLREMHAKYMKRVSRPGNTPRPWFDFSEERLLSRLFEEMDELREAVEKEDWENLRDELLDVANFCMYLWGKLSVKNIYDKGEEQ.

Positions 36–69 form a coiled coil; it reads SEERLLSRLFEEMDELREAVEKEDWENLRDELLD.

This is an uncharacterized protein from Archaeoglobus fulgidus (strain ATCC 49558 / DSM 4304 / JCM 9628 / NBRC 100126 / VC-16).